The chain runs to 209 residues: HTH-type transcriptional repressor BepR (209 aa).

Positions 9 to 69 (AETREAILLA…SIIGRARFPQ (61 aa)) constitute an HTH tetR-type domain. Residues 32 to 51 (TLTEIACYAGVTRGAIYFHF) constitute a DNA-binding region (H-T-H motif).

Functionally, represses expression of bepDE. The chain is HTH-type transcriptional repressor BepR (bepR) from Brucella suis biovar 1 (strain 1330).